Here is a 358-residue protein sequence, read N- to C-terminus: tRNA pseudouridine synthase B (358 aa).

The segment at 1 to 50 is disordered; the sequence is MTTPDAAIDSKISDSNGADKNKSAADDNAFNAPGRKRHHNNQPRRDKRDV. The active-site Nucleophile is the D87.

This sequence belongs to the pseudouridine synthase TruB family. Type 1 subfamily.

The enzyme catalyses uridine(55) in tRNA = pseudouridine(55) in tRNA. Responsible for synthesis of pseudouridine from uracil-55 in the psi GC loop of transfer RNAs. The sequence is that of tRNA pseudouridine synthase B from Nitrobacter winogradskyi (strain ATCC 25391 / DSM 10237 / CIP 104748 / NCIMB 11846 / Nb-255).